We begin with the raw amino-acid sequence, 694 residues long: uncharacterized protein (694 aa).

A coiled-coil region spans residues 15–51; sequence HKEKMELLDQFDNERKEWESQWKIMQKKIEELCREVK. 3 disordered regions span residues 259–286, 461–490, and 643–680; these read LKRN…EQAY, QNHS…QSND, and NASH…RRTT. Composition is skewed to polar residues over residues 272 to 283 and 476 to 490; these read STSRNFPSSDSE and DTSS…QSND. Positions 663–677 are enriched in low complexity; sequence SRWASRSPSAPPALR.

This is an uncharacterized protein from Homo sapiens (Human).